We begin with the raw amino-acid sequence, 249 residues long: Mediator of RNA polymerase II transcription subunit 8 (249 aa).

A coiled-coil region spans residues 1–26 (MQREEKQLDMLLEAVLNRLNDLKHSI). 2 stretches are compositionally biased toward polar residues: residues 215–224 (SPMSAVSPSG) and 235–249 (IKTN…HPYR). The segment at 215 to 249 (SPMSAVSPSGNAPMGKMPSGIKTNIKSANQVHPYR) is disordered.

Belongs to the Mediator complex subunit 8 family. In terms of assembly, component of the Mediator complex.

It is found in the nucleus. Its function is as follows. Component of the Mediator complex, a coactivator involved in the regulated transcription of nearly all RNA polymerase II-dependent genes. Mediator functions as a bridge to convey information from gene-specific regulatory proteins to the basal RNA polymerase II transcription machinery. Mediator is recruited to promoters by direct interactions with regulatory proteins and serves as a scaffold for the assembly of a functional preinitiation complex with RNA polymerase II and the general transcription factors. The protein is Mediator of RNA polymerase II transcription subunit 8 (MED8) of Anopheles gambiae (African malaria mosquito).